A 283-amino-acid polypeptide reads, in one-letter code: Putative S-adenosyl-L-methionine-dependent methyltransferase SAV_474/SAV474 (283 aa).

S-adenosyl-L-methionine-binding positions include Asp-121 and Asp-150–Leu-151. A disordered region spans residues Ala-258–Arg-283.

Belongs to the UPF0677 family.

Exhibits S-adenosyl-L-methionine-dependent methyltransferase activity. The sequence is that of Putative S-adenosyl-L-methionine-dependent methyltransferase SAV_474/SAV474 from Streptomyces avermitilis (strain ATCC 31267 / DSM 46492 / JCM 5070 / NBRC 14893 / NCIMB 12804 / NRRL 8165 / MA-4680).